We begin with the raw amino-acid sequence, 125 residues long: Histone H2A (125 aa).

The span at 1-18 shows a compositional bias: basic residues; it reads MSGRGKGGKVKGKSKTRS. Residues 1–23 form a disordered region; the sequence is MSGRGKGGKVKGKSKTRSSRAGL. Serine 2 carries the N-acetylserine modification. Glutamine 104 carries the post-translational modification N5-methylglutamine.

It belongs to the histone H2A family. As to quaternary structure, the nucleosome is a histone octamer containing two molecules each of H2A, H2B, H3 and H4 assembled in one H3-H4 heterotetramer and two H2A-H2B heterodimers. The octamer wraps approximately 147 bp of DNA.

It localises to the nucleus. The protein localises to the chromosome. In terms of biological role, core component of nucleosome. Nucleosomes wrap and compact DNA into chromatin, limiting DNA accessibility to the cellular machineries which require DNA as a template. Histones thereby play a central role in transcription regulation, DNA repair, DNA replication and chromosomal stability. DNA accessibility is regulated via a complex set of post-translational modifications of histones, also called histone code, and nucleosome remodeling. The chain is Histone H2A from Sepia officinalis (Common cuttlefish).